The chain runs to 649 residues: tRNA-guanine(15) transglycosylase (649 aa).

The active-site Nucleophile is D88. Substrate-binding residues include D123 and A194. Positions 280, 282, and 285 each coordinate Zn(2+). The PUA domain maps to 573–648 (NYRIVIDSSV…VAATLRGGIK (76 aa)).

Belongs to the archaeosine tRNA-ribosyltransferase family. The cofactor is Zn(2+).

The catalysed reaction is guanosine(15) in tRNA + 7-cyano-7-deazaguanine = 7-cyano-7-carbaguanosine(15) in tRNA + guanine. Its pathway is tRNA modification; archaeosine-tRNA biosynthesis. In terms of biological role, exchanges the guanine residue with 7-cyano-7-deazaguanine (preQ0) at position 15 in the dihydrouridine loop (D-loop) of archaeal tRNAs. This Methanococcus maripaludis (strain C5 / ATCC BAA-1333) protein is tRNA-guanine(15) transglycosylase.